Consider the following 398-residue polypeptide: Dual specificity mitogen-activated protein kinase kinase 2 (398 aa).

Residues Met1 to Glu29 form a disordered region. A Protein kinase domain is found at Phe70–Ile367. Residues Leu76 to Val84 and Lys99 contribute to the ATP site. Asp192 functions as the Proton acceptor in the catalytic mechanism. Residues Ser220 and Ser224 each carry the phosphoserine; by RAF modification.

It belongs to the protein kinase superfamily. STE Ser/Thr protein kinase family. MAP kinase kinase subfamily. In terms of processing, activated by phosphorylation on Ser/Thr catalyzed by MAP kinase kinase kinases (RAF).

The enzyme catalyses L-seryl-[protein] + ATP = O-phospho-L-seryl-[protein] + ADP + H(+). The catalysed reaction is L-threonyl-[protein] + ATP = O-phospho-L-threonyl-[protein] + ADP + H(+). It carries out the reaction L-tyrosyl-[protein] + ATP = O-phospho-L-tyrosyl-[protein] + ADP + H(+). In terms of biological role, catalyzes the concomitant phosphorylation of a threonine and a tyrosine residue in a Thr-Glu-Tyr sequence located in MAP kinases. Activates the ERK1 and ERK2 MAP kinases. The protein is Dual specificity mitogen-activated protein kinase kinase 2 (MAP2K2) of Gallus gallus (Chicken).